The sequence spans 960 residues: Testis anion transporter 1 (960 aa).

Over 1 to 93 (MQPDRSFQSF…YRFKDWLLGD (93 aa)) the chain is Cytoplasmic. Residues 94 to 114 (LLAGISVGLVQIPQVLMLGLL) form a helical membrane-spanning segment. At 115 to 117 (ARH) the chain is on the extracellular side. The helical transmembrane segment at 118 to 138 (LIPPLNVSYAAFCASVIYGIF) threads the bilayer. Residue G139 is a topological domain, cytoplasmic. A helical membrane pass occupies residues 140–160 (SCHQMSIGTFFLVSALAINVL). The Extracellular segment spans residues 161-201 (RTQPFNRGHLLLGTFIQADFSNTSFYENYNRSLSSVASVTL). The N-linked (GlcNAc...) asparagine glycan is linked to N190. 2 helical membrane-spanning segments follow: residues 202–222 (LTGI…VAYI) and 223–243 (PEAA…LSQL). Topologically, residues 244–268 (TCIFGIMISYNSGPIAFFYNIINYC) are cytoplasmic. A helical membrane pass occupies residues 269–289 (LGLPKANSTSILLFLTAMVAL). Topologically, residues 290–353 (RINKCIRISF…PVTPDMSNLT (64 aa)) are extracellular. The helical transmembrane segment at 354 to 374 (EVLIESFSLALVSSSLLVFLG) threads the bilayer. At 375 to 390 (KKIASFHNYDVNSNQD) the chain is on the cytoplasmic side. The chain crosses the membrane as a helical span at residues 391–411 (LIAIGLCNVVSSFFRSYVFTG). Topologically, residues 412–427 (AVARTIIQDKTGGRQQ) are extracellular. A helical membrane pass occupies residues 428 to 448 (FASLVGAGIMLLLMMKMARFF). At 449 to 453 (YRLPN) the chain is on the cytoplasmic side. A helical transmembrane segment spans residues 454–474 (AIVAGIILSNVLPYLEAVYTL). Residues 475–494 (PSLWRQNQYDCLIWMVTFMS) are Extracellular-facing. The helical transmembrane segment at 495–515 (AILLGLDIGLVVAVTFAFFII) threads the bilayer. Residues 516 to 960 (TVQSHRTKIL…ADTSEDALEI (445 aa)) lie on the Cytoplasmic side of the membrane. Residues 541 to 792 (DYREVANIPG…LTLHDAVLFA (252 aa)) form the STAS domain. The segment at 662-957 (ITSSSSQRNP…TSKADTSEDA (296 aa)) is interaction with RACGAP1. Disordered stretches follow at residues 807–857 (ESET…EESD) and 881–960 (EVEP…ALEI). Positions 818–827 (ETDKKEESRH) are enriched in basic and acidic residues. A compositionally biased stretch (acidic residues) spans 884–904 (PESELEPESELDQETELEPEP). The span at 926–935 (SPTQTQARTQ) shows a compositional bias: polar residues.

This sequence belongs to the SLC26A/SulP transporter (TC 2.A.53) family. As to quaternary structure, interacts with RACGAP1. Interacts with CFTR; stimulates anion transport activity of CFTR. N-glycosylated.

The protein resides in the membrane. The catalysed reaction is sulfate(out) + chloride(in) = sulfate(in) + chloride(out). The enzyme catalyses oxalate(in) + chloride(out) = oxalate(out) + chloride(in). Its function is as follows. Antiporter that mediates the exchange of sulfate and oxalate against chloride ions across a membrane. Stimulates anion transport activity of CFTR. May cooperate with CFTR in the regulation of chloride and bicarbonate ions fluxes required for activation of the ADCY10/PKA pathway during sperm motility and sperm capacitation. May play a role in sperm tail differentiation and motility and hence male fertility. This is Testis anion transporter 1 from Bos taurus (Bovine).